Here is a 55-residue protein sequence, read N- to C-terminus: Sporulation killing factor (55 aa).

Residues 1–29 constitute a propeptide that is removed on maturation; that stretch reads MKRNQKEWESVSKKGLMKPGGTSIVKAAG. Cys-30 and Cys-45 are disulfide-bonded. Residues 30–55 constitute a cross-link (cyclopeptide (Cys-Ile)); the sequence is CMGCWASKSIAMTRVCALPHPAMRAI. Residues 33–41 constitute a cross-link (2-(S-cysteinyl)-methionine (Cys-Met)); that stretch reads CWASKSIAM.

Post-translationally, this is a cyclic peptide. The first step in SKF maturation is probably thioether bond formation.

The protein resides in the secreted. Produces a 26-residue extracellular sporulation killing factor (SKF) that induces the lysis of other B.subtilis cells that have not entered the sporulation pathway, providing a source of nutrients to support sporulation, and at the same time delaying commitment to the energetically expensive and irreversible onset of sporulation. Can also inhibit growth of other bacteria at high concentrations. Addition of SKF to solid cultures induces killing, but it is much less effective than SDP (AC O34344). Has a role in protecting the secreted lipase LipA against proteolysis, either by modulating its folding or by acting as a protease inhibitor. The chain is Sporulation killing factor from Bacillus subtilis (strain 168).